The primary structure comprises 602 residues: Probable translation initiation factor IF-2 (602 aa).

Positions 10–227 (LRQPIVVVLG…LLAGLTQNYM (218 aa)) constitute a tr-type G domain. Positions 19 to 26 (GHVDHGKT) are G1. 19-26 (GHVDHGKT) provides a ligand contact to GTP. The G2 stretch occupies residues 44 to 48 (EMTQE). A G3 region spans residues 83–86 (DTPG). GTP-binding positions include 83-87 (DTPGH) and 137-140 (NKID). The interval 137 to 140 (NKID) is G4. Residues 205–207 (SAK) are G5.

The protein belongs to the TRAFAC class translation factor GTPase superfamily. Classic translation factor GTPase family. IF-2 subfamily.

Its function is as follows. Function in general translation initiation by promoting the binding of the formylmethionine-tRNA to ribosomes. Seems to function along with eIF-2. The polypeptide is Probable translation initiation factor IF-2 (Sulfurisphaera tokodaii (strain DSM 16993 / JCM 10545 / NBRC 100140 / 7) (Sulfolobus tokodaii)).